Consider the following 83-residue polypeptide: Mitochondrial import inner membrane translocase subunit Tim8 B (83 aa).

Alanine 2 is subject to N-acetylalanine. Residues 36–59 (CWDKCVEKPGNRLDSRTENCLSSC) carry the Twin CX3C motif motif. 2 disulfides stabilise this stretch: cysteine 36–cysteine 59 and cysteine 40–cysteine 55.

The protein belongs to the small Tim family. In terms of assembly, heterohexamer; possibly composed of 3 copies of TIMM8B and 3 copies of TIMM13, named soluble 70 kDa complex. Associates with the TIM22 complex, whose core is composed of TIMM22.

Its subcellular location is the mitochondrion inner membrane. Probable mitochondrial intermembrane chaperone that participates in the import and insertion of some multi-pass transmembrane proteins into the mitochondrial inner membrane. Also required for the transfer of beta-barrel precursors from the TOM complex to the sorting and assembly machinery (SAM complex) of the outer membrane. Acts as a chaperone-like protein that protects the hydrophobic precursors from aggregation and guide them through the mitochondrial intermembrane space. The protein is Mitochondrial import inner membrane translocase subunit Tim8 B (TIMM8B) of Bos taurus (Bovine).